The following is a 344-amino-acid chain: Heat-inducible transcription repressor HrcA (344 aa).

Belongs to the HrcA family.

Its function is as follows. Negative regulator of class I heat shock genes (grpE-dnaK-dnaJ and groELS operons). Prevents heat-shock induction of these operons. The sequence is that of Heat-inducible transcription repressor HrcA from Geobacillus sp. (strain WCH70).